Consider the following 97-residue polypeptide: Putative septation protein SpoVG (97 aa).

It belongs to the SpoVG family.

Functionally, could be involved in septation. The sequence is that of Putative septation protein SpoVG from Anaeromyxobacter sp. (strain Fw109-5).